The following is a 65-amino-acid chain: Ferredoxin-like protein in vnf region (65 aa).

4Fe-4S ferredoxin-type domains lie at 2-30 and 32-65; these read AMAI…FRDD and YAIE…PLDD. [4Fe-4S] cluster contacts are provided by Cys10, Cys13, Cys16, Cys20, Cys39, Cys42, Cys50, and Cys54.

[4Fe-4S] cluster is required as a cofactor.

In Azotobacter vinelandii, this protein is Ferredoxin-like protein in vnf region.